The chain runs to 236 residues: C-&gt;U-editing enzyme APOBEC-1 (236 aa).

The region spanning 10 to 134 (GDPTLRRRIE…QRNRQGLRDL (125 aa)) is the CMP/dCMP-type deaminase domain. H61 is a Zn(2+) binding site. Catalysis depends on E63, which acts as the Proton donor. The Zn(2+) site is built by C93 and C96.

The protein belongs to the cytidine and deoxycytidylate deaminase family. Homodimer. Interacts with A1CF; form an mRNA editing complex. Interacts with RBM47; form an mRNA editing complex. Found in a complex with CELF2/CUGBP2 and A1CF. Interacts with HNRPAB. Interacts with SYNCRIP. Zn(2+) serves as cofactor.

The protein resides in the cytoplasm. The protein localises to the nucleus. It carries out the reaction a cytidine in mRNA + H2O + H(+) = a uridine in mRNA + NH4(+). The enzyme catalyses cytidine(6666) in apoB mRNA + H2O + H(+) = uridine(6666) in apoB mRNA + NH4(+). Cytidine deaminase catalyzing the cytidine to uridine postranscriptional editing of a variety of mRNAs. Form complexes with cofactors that confer differential editing activity and selectivity. Responsible for the postranscriptional editing of a CAA codon for Gln to a UAA codon for stop in the apolipoprotein B mRNA. Also involved in CGA (Arg) to UGA (Stop) editing in the NF1 mRNA. May also play a role in the epigenetic regulation of gene expression by participating in DNA demethylation. The polypeptide is C-&gt;U-editing enzyme APOBEC-1 (Pongo pygmaeus (Bornean orangutan)).